A 214-amino-acid chain; its full sequence is Large ribosomal subunit protein uL16 (214 aa).

The protein belongs to the universal ribosomal protein uL16 family. As to quaternary structure, component of the large ribosomal subunit. Mature ribosomes consist of a small (40S) and a large (60S) subunit. The 40S subunit contains about 33 different proteins and 1 molecule of RNA (18S). The 60S subunit contains about 49 different proteins and 3 molecules of RNA (28S, 5.8S and 5S).

The chain is Large ribosomal subunit protein uL16 (rpl-10L) from Caenorhabditis elegans.